We begin with the raw amino-acid sequence, 530 residues long: uncharacterized protein (530 aa).

This sequence belongs to the mimivirus R640 family.

This is an uncharacterized protein from Acanthamoeba polyphaga (Amoeba).